We begin with the raw amino-acid sequence, 242 residues long: DNA repair protein RecO (242 aa).

It belongs to the RecO family.

Involved in DNA repair and RecF pathway recombination. This chain is DNA repair protein RecO, found in Bacteroides fragilis (strain ATCC 25285 / DSM 2151 / CCUG 4856 / JCM 11019 / LMG 10263 / NCTC 9343 / Onslow / VPI 2553 / EN-2).